Here is a 283-residue protein sequence, read N- to C-terminus: Vitamin K epoxide reductase homolog (283 aa).

Over 1-20 the chain is Cytoplasmic; it reads MASYLKLKAQEETWLQRHSR. A helical transmembrane segment spans residues 21–41; it reads LILAILAGLGSLLTAYLTYTK. Topologically, residues 42–66 are periplasmic; it reads LTEQPAAFCTGDGGCDLVLSSRWAE. Cysteine 50 and cysteine 56 form a disulfide bridge. 59–65 lines the a quinone pocket; the sequence is VLSSRWA. A helical transmembrane segment spans residues 67–87; it reads FLGIPTAAVGLLGFLGVLALA. Over 88-102 the chain is Cytoplasmic; sequence VLPDGLPLVKRWRWP. A helical transmembrane segment spans residues 103-123; it reads ALFGLVSAMTAFEMYMLYLMV. 111 to 122 serves as a coordination point for a quinone; that stretch reads MTAFEMYMLYLM. Residues 124–128 are Periplasmic-facing; the sequence is AVLRQ. The helical transmembrane segment at 129–149 threads the bilayer; sequence FCMYCTTAIILVAGLGLVTVL. A disulfide bridge connects residues cysteine 130 and cysteine 133. The Cytoplasmic portion of the chain corresponds to 150-158; sequence GHRWLDGGK. Residues 159-179 form a helical membrane-spanning segment; that stretch reads LAFSYILVAFLTLVTTIGVYA. Topologically, residues 180–283 are periplasmic; that stretch reads NQVPPPSPLA…ASGYPLEEGR (104 aa). Residues 186–283 form a thioredoxin-like domain region; sequence SPLAVGLAAH…ASGYPLEEGR (98 aa). Cystine bridges form between cysteine 209–cysteine 212 and cysteine 231–cysteine 244.

Belongs to the VKOR family.

It localises to the membrane. Inhibited by ferulenol. Thiol-disulfide oxidoreductase that catalyzes vitamin K-dependent disulfide bond formation in periplasmic target proteins. The protein is Vitamin K epoxide reductase homolog of Synechococcus sp. (strain JA-2-3B'a(2-13)) (Cyanobacteria bacterium Yellowstone B-Prime).